Consider the following 122-residue polypeptide: uncharacterized protein (122 aa).

An N-terminal signal peptide occupies residues 1-35 (MCCYVGKATKIFLCLAAALIVVGLVLGFGLAHRTW). The interval 55–83 (YGGGGGGGDPLPATSGAGDTPPGVPLTEP) is disordered.

This is an uncharacterized protein from Oryza sativa subsp. japonica (Rice).